The primary structure comprises 115 residues: Large ribosomal subunit protein bL20 (115 aa).

It belongs to the bacterial ribosomal protein bL20 family.

Binds directly to 23S ribosomal RNA and is necessary for the in vitro assembly process of the 50S ribosomal subunit. It is not involved in the protein synthesizing functions of that subunit. The polypeptide is Large ribosomal subunit protein bL20 (Prochlorococcus marinus (strain MIT 9301)).